A 900-amino-acid polypeptide reads, in one-letter code: Translation initiation factor IF-2 (900 aa).

A compositionally biased stretch (basic and acidic residues) spans L80–R95. Disordered regions lie at residues L80–R106, A149–V169, and D221–K268. Residues G253–K262 show a composition bias toward basic residues. Residues T397 to K567 enclose the tr-type G domain. The tract at residues G406–T413 is G1. G406–T413 lines the GTP pocket. A G2 region spans residues G431–H435. The G3 stretch occupies residues D453–G456. GTP is bound by residues D453–H457 and N507–D510. Residues N507 to D510 form a G4 region. The segment at S543–K545 is G5.

It belongs to the TRAFAC class translation factor GTPase superfamily. Classic translation factor GTPase family. IF-2 subfamily.

It localises to the cytoplasm. In terms of biological role, one of the essential components for the initiation of protein synthesis. Protects formylmethionyl-tRNA from spontaneous hydrolysis and promotes its binding to the 30S ribosomal subunits. Also involved in the hydrolysis of GTP during the formation of the 70S ribosomal complex. The sequence is that of Translation initiation factor IF-2 from Chlorobium phaeovibrioides (strain DSM 265 / 1930) (Prosthecochloris vibrioformis (strain DSM 265)).